Here is a 355-residue protein sequence, read N- to C-terminus: Lipoyl synthase (355 aa).

One can recognise an RPE1 insert domain in the interval 7–55; the sequence is HLSKFAYREEFAGNTEVLATAAYKEDCADASTGLTPKLPLEVEFGKMSK. [4Fe-4S] cluster is bound by residues Cys86, Cys91, Cys97, Cys112, Cys116, Cys119, and Ser325. The region spanning 98-314 is the Radical SAM core domain; the sequence is WSKKHATVMI…ERVARTKGFL (217 aa).

It belongs to the radical SAM superfamily. Lipoyl synthase family. [4Fe-4S] cluster serves as cofactor.

It is found in the cytoplasm. It catalyses the reaction [[Fe-S] cluster scaffold protein carrying a second [4Fe-4S](2+) cluster] + N(6)-octanoyl-L-lysyl-[protein] + 2 oxidized [2Fe-2S]-[ferredoxin] + 2 S-adenosyl-L-methionine + 4 H(+) = [[Fe-S] cluster scaffold protein] + N(6)-[(R)-dihydrolipoyl]-L-lysyl-[protein] + 4 Fe(3+) + 2 hydrogen sulfide + 2 5'-deoxyadenosine + 2 L-methionine + 2 reduced [2Fe-2S]-[ferredoxin]. Its pathway is protein modification; protein lipoylation via endogenous pathway; protein N(6)-(lipoyl)lysine from octanoyl-[acyl-carrier-protein]: step 2/2. Its function is as follows. Catalyzes the radical-mediated insertion of two sulfur atoms into the C-6 and C-8 positions of the octanoyl moiety bound to the lipoyl domains of lipoate-dependent enzymes, thereby converting the octanoylated domains into lipoylated derivatives. This Rickettsia bellii (strain RML369-C) protein is Lipoyl synthase.